Here is a 241-residue protein sequence, read N- to C-terminus: Ubiquinone biosynthesis O-methyltransferase (241 aa).

S-adenosyl-L-methionine-binding residues include Arg46, Gly66, Asp87, and Met131.

The protein belongs to the methyltransferase superfamily. UbiG/COQ3 family.

It catalyses the reaction a 3-demethylubiquinol + S-adenosyl-L-methionine = a ubiquinol + S-adenosyl-L-homocysteine + H(+). It carries out the reaction a 3-(all-trans-polyprenyl)benzene-1,2-diol + S-adenosyl-L-methionine = a 2-methoxy-6-(all-trans-polyprenyl)phenol + S-adenosyl-L-homocysteine + H(+). It participates in cofactor biosynthesis; ubiquinone biosynthesis. Its function is as follows. O-methyltransferase that catalyzes the 2 O-methylation steps in the ubiquinone biosynthetic pathway. This chain is Ubiquinone biosynthesis O-methyltransferase, found in Bordetella bronchiseptica (strain ATCC BAA-588 / NCTC 13252 / RB50) (Alcaligenes bronchisepticus).